The following is a 380-amino-acid chain: Cytochrome b (380 aa).

The next 4 helical transmembrane spans lie at 34–54 (FGSLLGICLITQILTGLLLAM), 78–99 (WLIRNLHANGASLFFICVYLHI), 114–134 (WNTGIILLLTLMATAFVGYVL), and 179–199 (FFALHFLLPFLIAGLTLIHLT). Residues His84 and His98 each coordinate heme b. Heme b contacts are provided by His183 and His197. His202 provides a ligand contact to a ubiquinone. A run of 4 helical transmembrane segments spans residues 227–247 (LKDLLGAALMLSPLAILALFT), 289–309 (LGGVLALAASVLILFLSPFLH), 321–341 (LSQLLFWFLVANLLILTWVGS), and 348–368 (FIIIGQLASFTYFTTLLVLLP).

This sequence belongs to the cytochrome b family. As to quaternary structure, the cytochrome bc1 complex contains 11 subunits: 3 respiratory subunits (MT-CYB, CYC1 and UQCRFS1), 2 core proteins (UQCRC1 and UQCRC2) and 6 low-molecular weight proteins (UQCRH/QCR6, UQCRB/QCR7, UQCRQ/QCR8, UQCR10/QCR9, UQCR11/QCR10 and a cleavage product of UQCRFS1). This cytochrome bc1 complex then forms a dimer. Requires heme b as cofactor.

The protein localises to the mitochondrion inner membrane. In terms of biological role, component of the ubiquinol-cytochrome c reductase complex (complex III or cytochrome b-c1 complex) that is part of the mitochondrial respiratory chain. The b-c1 complex mediates electron transfer from ubiquinol to cytochrome c. Contributes to the generation of a proton gradient across the mitochondrial membrane that is then used for ATP synthesis. The protein is Cytochrome b (MT-CYB) of Herpetotheres cachinnans (Laughing falcon).